Reading from the N-terminus, the 483-residue chain is Type 2 glycosyltransferase (483 aa).

The chain crosses the membrane as a helical span at residues 21–41; the sequence is AVVYLSALFTPWFTAFCVLWL. Residues 156-158 carry the Dxd motif motif; sequence DDD. Positions 301–305 match the QxxxRW motif motif; sequence QCSRW. The N-linked (GlcNAc...) asparagine glycan is linked to asparagine 313. Transmembrane regions (helical) follow at residues 336–356, 369–389, and 396–416; these read IATF…ALWW, AIYA…VGLF, and IMFL…KIYA. A glycan (N-linked (GlcNAc...) asparagine) is linked at asparagine 421.

The protein belongs to the GT2 glycosyltransferase family.

It is found in the cell membrane. Its function is as follows. Glycosyltransferase that plays an important role in infection-related morphogenesis and pathogenesis. Involved in stress tolerance and hyphal hydrophobicity via its regulation of the expression of nydrophobin MPG1. May regulate growth, pathogenicity, and cell wall integrity (CWI) through glycosylation of heat shock protein SSB1, and other (unidentified) substrates may contribute to conidiation. Candidate proteins as potential substrates of GT2 include several heat shock proteins (SSB1/MGG_02503, MGG_06759 and MGG_06958), two coiled-coil domain-containing proteins (MGG_04321 and MGG_09571), aminopeptidase 2 (MGG_16472), and a nuclease domain-containing protein (MGG_12646). This is Type 2 glycosyltransferase from Pyricularia oryzae (strain 70-15 / ATCC MYA-4617 / FGSC 8958) (Rice blast fungus).